Reading from the N-terminus, the 120-residue chain is Large ribosomal subunit protein eL34z (120 aa).

Residues 31-51 (VYQTTKKRASGPKCPVTGKRI) form a disordered region.

Belongs to the eukaryotic ribosomal protein eL34 family.

The protein is Large ribosomal subunit protein eL34z (RPL34A) of Arabidopsis thaliana (Mouse-ear cress).